Consider the following 312-residue polypeptide: tRNA dimethylallyltransferase (312 aa).

ATP is bound at residue 15–22 (GPTAAGKS). Substrate is bound at residue 17 to 22 (TAAGKS). Residues 40-43 (DSMQ) are interaction with substrate tRNA.

It belongs to the IPP transferase family. As to quaternary structure, monomer. Mg(2+) is required as a cofactor.

It carries out the reaction adenosine(37) in tRNA + dimethylallyl diphosphate = N(6)-dimethylallyladenosine(37) in tRNA + diphosphate. Its function is as follows. Catalyzes the transfer of a dimethylallyl group onto the adenine at position 37 in tRNAs that read codons beginning with uridine, leading to the formation of N6-(dimethylallyl)adenosine (i(6)A). The sequence is that of tRNA dimethylallyltransferase from Streptomyces coelicolor (strain ATCC BAA-471 / A3(2) / M145).